A 360-amino-acid chain; its full sequence is Alanine racemase (360 aa).

Lys34 functions as the Proton acceptor; specific for D-alanine in the catalytic mechanism. N6-(pyridoxal phosphate)lysine is present on Lys34. Substrate is bound at residue Arg129. Catalysis depends on Tyr254, which acts as the Proton acceptor; specific for L-alanine. Met302 contributes to the substrate binding site.

It belongs to the alanine racemase family. Pyridoxal 5'-phosphate serves as cofactor.

The enzyme catalyses L-alanine = D-alanine. It functions in the pathway amino-acid biosynthesis; D-alanine biosynthesis; D-alanine from L-alanine: step 1/1. Its function is as follows. Catalyzes the interconversion of L-alanine and D-alanine. May also act on other amino acids. The sequence is that of Alanine racemase (alr) from Pectobacterium carotovorum subsp. carotovorum (strain PC1).